The sequence spans 277 residues: Putative phosphoenolpyruvate synthase regulatory protein (277 aa).

157-164 (GVSRCGKT) lines the ADP pocket.

Belongs to the pyruvate, phosphate/water dikinase regulatory protein family. PSRP subfamily.

The enzyme catalyses [pyruvate, water dikinase] + ADP = [pyruvate, water dikinase]-phosphate + AMP + H(+). The catalysed reaction is [pyruvate, water dikinase]-phosphate + phosphate + H(+) = [pyruvate, water dikinase] + diphosphate. Its function is as follows. Bifunctional serine/threonine kinase and phosphorylase involved in the regulation of the phosphoenolpyruvate synthase (PEPS) by catalyzing its phosphorylation/dephosphorylation. In Enterobacter sp. (strain 638), this protein is Putative phosphoenolpyruvate synthase regulatory protein.